Consider the following 128-residue polypeptide: Large ribosomal subunit protein bL12c (128 aa).

The protein belongs to the bacterial ribosomal protein bL12 family. As to quaternary structure, homodimer. Part of the ribosomal stalk of the 50S ribosomal subunit. Forms a multimeric L10(L12)X complex, where L10 forms an elongated spine to which 2 to 4 L12 dimers bind in a sequential fashion. Binds GTP-bound translation factors.

The protein localises to the plastid. It localises to the chloroplast. Its function is as follows. Forms part of the ribosomal stalk which helps the ribosome interact with GTP-bound translation factors. Is thus essential for accurate translation. The chain is Large ribosomal subunit protein bL12c from Phaeodactylum tricornutum (strain CCAP 1055/1).